We begin with the raw amino-acid sequence, 297 residues long: Pyridoxal 5'-phosphate synthase subunit Pdx1 (297 aa).

Asp-27 provides a ligand contact to D-ribose 5-phosphate. The active-site Schiff-base intermediate with D-ribose 5-phosphate is Lys-84. Residue Gly-156 participates in D-ribose 5-phosphate binding. Residue Arg-168 participates in D-glyceraldehyde 3-phosphate binding. Residues Gly-217 and 238-239 (GS) each bind D-ribose 5-phosphate.

It belongs to the PdxS/SNZ family. In terms of assembly, homohexamer and homododecamer. In the presence of Pdx2, forms a dodecamer of heterodimers.

The catalysed reaction is aldehydo-D-ribose 5-phosphate + D-glyceraldehyde 3-phosphate + L-glutamine = pyridoxal 5'-phosphate + L-glutamate + phosphate + 3 H2O + H(+). It functions in the pathway cofactor biosynthesis; pyridoxal 5'-phosphate biosynthesis. Its function is as follows. Catalyzes the formation of pyridoxal 5'-phosphate from ribose 5-phosphate (RBP), glyceraldehyde 3-phosphate (G3P) and ammonia. The ammonia is provided by Pdx2. Can also use ribulose 5-phosphate and dihydroxyacetone phosphate as substrates, resulting from enzyme-catalyzed isomerization of RBP and G3P, respectively. In Plasmodium berghei, this protein is Pyridoxal 5'-phosphate synthase subunit Pdx1.